The following is a 421-amino-acid chain: Gamma-glutamyl phosphate reductase (421 aa).

Belongs to the gamma-glutamyl phosphate reductase family.

Its subcellular location is the cytoplasm. The catalysed reaction is L-glutamate 5-semialdehyde + phosphate + NADP(+) = L-glutamyl 5-phosphate + NADPH + H(+). It functions in the pathway amino-acid biosynthesis; L-proline biosynthesis; L-glutamate 5-semialdehyde from L-glutamate: step 2/2. Catalyzes the NADPH-dependent reduction of L-glutamate 5-phosphate into L-glutamate 5-semialdehyde and phosphate. The product spontaneously undergoes cyclization to form 1-pyrroline-5-carboxylate. This Pseudomonas aeruginosa (strain UCBPP-PA14) protein is Gamma-glutamyl phosphate reductase.